A 627-amino-acid polypeptide reads, in one-letter code: Threonine--tRNA ligase (627 aa).

Positions 221 to 523 are catalytic; sequence DHRKLGRELG…LIEHFAGDFP (303 aa). Residues cysteine 319, histidine 370, and histidine 500 each contribute to the Zn(2+) site.

Belongs to the class-II aminoacyl-tRNA synthetase family. As to quaternary structure, homodimer. Zn(2+) serves as cofactor.

It is found in the cytoplasm. It carries out the reaction tRNA(Thr) + L-threonine + ATP = L-threonyl-tRNA(Thr) + AMP + diphosphate + H(+). Functionally, catalyzes the attachment of threonine to tRNA(Thr) in a two-step reaction: L-threonine is first activated by ATP to form Thr-AMP and then transferred to the acceptor end of tRNA(Thr). Also edits incorrectly charged L-seryl-tRNA(Thr). This chain is Threonine--tRNA ligase, found in Gloeobacter violaceus (strain ATCC 29082 / PCC 7421).